We begin with the raw amino-acid sequence, 67 residues long: Ranatuerin-2Vb (67 aa).

Positions methionine 1 to cysteine 22 are cleaved as a signal peptide. The propeptide occupies glutamate 23 to arginine 39. Cysteine 62 and cysteine 67 are joined by a disulfide.

Expressed by the skin glands.

The protein localises to the secreted. Functionally, antimicrobial peptide. The chain is Ranatuerin-2Vb from Odorrana versabilis (Chinese bamboo leaf odorous frog).